A 353-amino-acid polypeptide reads, in one-letter code: Ig alpha-1 chain C region (353 aa).

The region spanning 6-98 (PKVFPLSLCS…HYTNPSQDVT (93 aa)) is the Ig-like 1 domain. 2 disulfides stabilise this stretch: Cys-26–Cys-85 and Cys-77–Cys-101. The tract at residues 96–121 (DVTVPCRVPSTPPTPSPSTPPTPSPP) is disordered. The segment covering 105–121 (STPPTPSPSTPPTPSPP) has biased composition (pro residues). 3 disulfide bridges follow: Cys-123–Cys-180, Cys-147–Cys-204, and Cys-250–Cys-313. 2 Ig-like domains span residues 125 to 220 (PRLS…ATLS) and 228 to 330 (PEVH…KTID). Residue Asn-144 is glycosylated (N-linked (GlcNAc...) asparagine). Residue Asn-340 is glycosylated (N-linked (GlcNAc...) asparagine). Cys-352 contacts 3-hydroxy-L-kynurenine.

Monomeric or polymeric. Post-translationally, 3-Hydroxykynurenine, an oxidized tryptophan metabolite that is common in biological fluids, reacts with alpha-1-microglobulin to form heterogeneous polycyclic chromophores including hydroxanthommatin. The chromophore reacts with accessible cysteines forming non-reducible thioether cross-links with Ig alpha-1 chain C region Cys-352.

Functionally, ig alpha is the major immunoglobulin class in body secretions. It may serve both to defend against local infection and to prevent access of foreign antigens to the general immunologic system. This Gorilla gorilla gorilla (Western lowland gorilla) protein is Ig alpha-1 chain C region (IGHA1).